The sequence spans 406 residues: Copper transport protein CTR1 (406 aa).

Residues 1 to 152 (MEGMNMGSSM…HHLHANNSGK (152 aa)) lie on the Cytoplasmic side of the membrane. 3 consecutive repeat copies span residues 9-27 (SMNM…SSMA), 28-46 (SMSM…SSMS), and 47-65 (SMSM…STMS). The segment at 9-65 (SMNMDAMSSASKTVASSMASMSMDAMSSASKTILSSMSSMSMEAMSSASKTLASTMS) is 3 X 19 AA tandem repeats of S-M-X-M-X-A-M-S-S-A-S-K-T-X-X-S-X-M-X. The disordered stretch occupies residues 71–117 (SMGSSSMSGMSMSMSSTPTSSASAQTTSDSSMSGMSGMSSSDNSSSS). A helical membrane pass occupies residues 153-173 (AFGIFLLFVVAAFVYKLLLFV). Residues 174-250 (SWCLEVHWFK…RAFLVFTSTM (77 aa)) lie on the Extracellular side of the membrane. The helical transmembrane segment at 251–271 (IIYMLMLATMSFVLTYVFAVI) threads the bilayer. The Cytoplasmic segment spans residues 272–406 (TGLALSEVFF…LLPAEKFTHN (135 aa)). Residues 304–315 (CPGFGNCQCGRH) carry the REP-III motif. The segment at 318 to 406 (PSPDPIAVAD…LLPAEKFTHN (89 aa)) is disordered. Position 344 is a phosphoserine (Ser-344). Residue Lys-345 forms a Glycyl lysine isopeptide (Lys-Gly) (interchain with G-Cter in ubiquitin) linkage. At Ser-349 the chain carries Phosphoserine. 2 stretches are compositionally biased toward polar residues: residues 349–375 (SENN…NQAN) and 384–395 (SKLQEQSGNMDQ). Thr-356 carries the post-translational modification Phosphothreonine. Residue Ser-369 is modified to Phosphoserine.

Homooligomer. Extensively O-glycosylated.

The protein localises to the cell membrane. It catalyses the reaction Cu(2+)(in) = Cu(2+)(out). Its function is as follows. High-affinity copper transporter of plasma membrane that mediates copper uptake under low copper conditions. Copper transport through the high affinity system requiring CTRl supplies the iron transport multicopper ferroxidase FET3 with copper, which in turn is required for ferrous iron uptake. The energy for translocation is unlikely to be directly derived from ATP hydrolysis and the exact mechanism driving the transmembrane transport of copper has still to be determined. Binds 4 copper ions via its C-terminal cystein-rich domain and is able to deliver Cu(I) directly to both the chaperone ATX1 and to an N-terminal domain of the CCC2 protein. Also able to mediate the uptake of the anticancer drug cisplatin. The sequence is that of Copper transport protein CTR1 from Saccharomyces cerevisiae (strain ATCC 204508 / S288c) (Baker's yeast).